Consider the following 38-residue polypeptide: 4 kDa defensin (38 aa).

3 disulfides stabilise this stretch: Cys4–Cys25, Cys11–Cys33, and Cys15–Cys35.

Belongs to the invertebrate defensin family. Type 2 subfamily.

It localises to the secreted. Functionally, dual-function peptide with antimicrobial and potassium channel-blocking activities. Shows inhibitory activity against Gram-positive bacteria such as M.luteus, S.aureus, B.subtilis, and M.luteus as well as methicillin-resistant S.aureus (MIC=0.1-20 uM). Does not act on bacteria by disrupting membranes. Also moderately inhibits Kv1.1/KCNA1, Kv1.2/KCNA2, and Kv1.3/KCNA3 potassium channels. Inhibits potassium channels by interacting with the pore region. Does not show hemolytic activity. This is 4 kDa defensin from Leiurus hebraeus (Hebrew deathstalker scorpion).